The following is a 543-amino-acid chain: Chaperonin GroEL (543 aa).

ATP contacts are provided by residues 29-32, 86-90, G413, 476-478, and D492; these read TLGP, DGTTT, and NAA.

It belongs to the chaperonin (HSP60) family. As to quaternary structure, forms a cylinder of 14 subunits composed of two heptameric rings stacked back-to-back. Interacts with the co-chaperonin GroES.

It localises to the cytoplasm. The enzyme catalyses ATP + H2O + a folded polypeptide = ADP + phosphate + an unfolded polypeptide.. Functionally, together with its co-chaperonin GroES, plays an essential role in assisting protein folding. The GroEL-GroES system forms a nano-cage that allows encapsulation of the non-native substrate proteins and provides a physical environment optimized to promote and accelerate protein folding. The polypeptide is Chaperonin GroEL (Streptococcus pyogenes serotype M1).